Reading from the N-terminus, the 346-residue chain is Membrane progestin receptor alpha (346 aa).

At 1 to 72 (MAMAQKLSHL…RTLFQQHNEA (72 aa)) the chain is on the cytoplasmic side. Residues 73-93 (VNVWTHLLAALVLLLRLALFV) traverse the membrane as a helical segment. The Extracellular portion of the chain corresponds to 94–103 (ETVDFWGDPH). A helical membrane pass occupies residues 104–124 (ALPLFIIVLASFTYLSFSALA). Residues 125 to 137 (HLLQAKSEFWHYS) are Cytoplasmic-facing. A helical transmembrane segment spans residues 138–158 (FFFLDYVGVAVYQFGSALAHF). Over 159–169 (YYAIEPAWHAQ) the chain is Extracellular. Residues 170–190 (VQAVFLPMAAFLAWLSCIGSC) traverse the membrane as a helical segment. At 191-237 (YNKYIQKPGLLGRTCQEVPSVLAYALDISPVVHRIFVSSDPTTDDPA) the chain is on the cytoplasmic side. The helical transmembrane segment at 238-258 (LLYHKCQVVFFLLAAAFFSTF) threads the bilayer. The Extracellular segment spans residues 259–276 (MPERWFPGSCHVFGQGHQ). A helical membrane pass occupies residues 277 to 297 (LFHIFLVLCTLAQLEAVALDY). Topologically, residues 298 to 316 (EARRPIYEPLHTHWPHNFS) are cytoplasmic. A helical membrane pass occupies residues 317–337 (GLFLLTVGSSILTAFLLSQLV). Residues 338–346 (QRKLDQKTK) lie on the Extracellular side of the membrane.

It belongs to the ADIPOR family. Expressed in a wide range of tissues including ovary, testis, placenta, uterus and bladder.

It is found in the cell membrane. Functionally, plasma membrane progesterone (P4) receptor coupled to G proteins. Seems to act through a G(i) mediated pathway. May be involved in oocyte maturation. Involved in neurosteroid inhibition of apoptosis. Also binds dehydroepiandrosterone (DHEA), pregnanolone, pregnenolone and allopregnanolone. The polypeptide is Membrane progestin receptor alpha (Homo sapiens (Human)).